Here is a 414-residue protein sequence, read N- to C-terminus: DNA polymerase IV (414 aa).

Residues 8-189 (IFHIDMNSFY…LPIEEMHGIG (182 aa)) enclose the UmuC domain. The Mg(2+) site is built by D12 and D108. E109 is a catalytic residue. Positions 394-414 (EESKTRGTSFNRDFFQDEKKR) are disordered.

It belongs to the DNA polymerase type-Y family. Monomer. Requires Mg(2+) as cofactor.

The protein localises to the cytoplasm. The catalysed reaction is DNA(n) + a 2'-deoxyribonucleoside 5'-triphosphate = DNA(n+1) + diphosphate. Its function is as follows. Poorly processive, error-prone DNA polymerase involved in untargeted mutagenesis. Copies undamaged DNA at stalled replication forks, which arise in vivo from mismatched or misaligned primer ends. These misaligned primers can be extended by PolIV. Exhibits no 3'-5' exonuclease (proofreading) activity. May be involved in translesional synthesis, in conjunction with the beta clamp from PolIII. This is DNA polymerase IV from Bacillus velezensis (strain DSM 23117 / BGSC 10A6 / LMG 26770 / FZB42) (Bacillus amyloliquefaciens subsp. plantarum).